The sequence spans 315 residues: 31 kDa ribonucleoprotein, chloroplastic (315 aa).

The transit peptide at 1–71 directs the protein to the chloroplast; that stretch reads MSCATKPIIK…LSPKKKTSVS (71 aa). The tract at residues 114–133 is disordered; sequence AGESDEVEADEEEEEFQEPP. A compositionally biased stretch (acidic residues) spans 115 to 133; it reads GESDEVEADEEEEEFQEPP. RRM domains follow at residues 136–214 and 230–308; these read AKLF…KAAR and YRIY…VAED.

The protein resides in the plastid. The protein localises to the chloroplast. Could be involved in splicing and/or processing of chloroplast RNA's. The chain is 31 kDa ribonucleoprotein, chloroplastic from Nicotiana sylvestris (Wood tobacco).